The sequence spans 452 residues: Pup--protein ligase (452 aa).

Glu-9 provides a ligand contact to Mg(2+). Residue Arg-53 coordinates ATP. Tyr-55 is a Mg(2+) binding site. Asp-57 (proton acceptor) is an active-site residue. Glu-63 serves as a coordination point for Mg(2+). Positions 66 and 419 each coordinate ATP.

It belongs to the Pup ligase/Pup deamidase family. Pup-conjugating enzyme subfamily.

The enzyme catalyses ATP + [prokaryotic ubiquitin-like protein]-L-glutamate + [protein]-L-lysine = ADP + phosphate + N(6)-([prokaryotic ubiquitin-like protein]-gamma-L-glutamyl)-[protein]-L-lysine.. Its pathway is protein degradation; proteasomal Pup-dependent pathway. It participates in protein modification; protein pupylation. Catalyzes the covalent attachment of the prokaryotic ubiquitin-like protein modifier Pup to the proteasomal substrate proteins, thereby targeting them for proteasomal degradation. This tagging system is termed pupylation. The ligation reaction involves the side-chain carboxylate of the C-terminal glutamate of Pup and the side-chain amino group of a substrate lysine. This is Pup--protein ligase from Saccharomonospora viridis (strain ATCC 15386 / DSM 43017 / JCM 3036 / CCUG 5913 / NBRC 12207 / NCIMB 9602 / P101) (Thermoactinomyces viridis).